The sequence spans 263 residues: Protein PUN1 (263 aa).

Residues 1-6 (MRNFFT) are Cytoplasmic-facing. The helical transmembrane segment at 7–27 (LFFAAIFSLGALILAIVACAG) threads the bilayer. The Extracellular segment spans residues 28–143 (STKNYSPINK…MTYYNNLVKC (116 aa)). An N-linked (GlcNAc...) asparagine glycan is attached at Asn100. The helical transmembrane segment at 144 to 164 (MFITILIGIVLTFVNLVFNVL) threads the bilayer. Topologically, residues 165-172 (RWIIHIRP) are cytoplasmic. Residues 173 to 193 (LTWFGAFFSFFAFAALLVSIG) form a helical membrane-spanning segment. At 194–223 (SCLGTYSYIKYILKHNYSDYGISMSIGRNY) the chain is on the extracellular side. The N-linked (GlcNAc...) asparagine glycan is linked to Asn209. A helical membrane pass occupies residues 224 to 244 (QGLMWGAVVGALLNFILWCSV). Topologically, residues 245 to 263 (RSRPTVIYANAPIEEKPLI) are cytoplasmic. Lys260 is covalently cross-linked (Glycyl lysine isopeptide (Lys-Gly) (interchain with G-Cter in ubiquitin)).

It belongs to the SUR7 family. N-glycosylated.

It localises to the cell membrane. Its function is as follows. Contributes to the wild-type cellular response to nitrogen stress through signaling pathways that regulate the expression of genes involved in amino acid biosynthesis. Required for wild-type filamentous growth, cell growth, and cell-cell adhesion. This chain is Protein PUN1 (PUN1), found in Saccharomyces cerevisiae (strain ATCC 204508 / S288c) (Baker's yeast).